Here is a 371-residue protein sequence, read N- to C-terminus: MDPDRQADIAALAATLTTVERVLDVDGLRDRIQKLEQEASDPNLWDDQSRAQKVTSELSHAQNELRRVEELRQRVEDLPVLYEMAAEEEGQDAENAGAEADAELAKLRVDIEAMEVRTLLSGEYDEREAVVTIRSGAGGVDAADWAEMLMRMYIRWAEQHDYPVEVFDTSYAEEAGIKSATFAVHAPYAYGTLSVEQGTHRLVRISPFDNQSRRQTSFADVEVLPVVETTDHIDVPETDLRVDVYRSSGPGGQSVNTTDSAVRLTHIPTGIVVTCQNEKSQLQNKVAAMRVLQAKLLARKKQEERAELDALKGDGGSSWGNQMRSYVLHPYQMVKDLRTEYEVGNPSAVLDGDIDGFLEAGIRWRNRRDDD.

The residue at position 253 (glutamine 253) is an N5-methylglutamine.

Belongs to the prokaryotic/mitochondrial release factor family. Methylated by PrmC. Methylation increases the termination efficiency of RF2.

Its subcellular location is the cytoplasm. Functionally, peptide chain release factor 2 directs the termination of translation in response to the peptide chain termination codons UGA and UAA. In Mycobacterium sp. (strain KMS), this protein is Peptide chain release factor 2.